The primary structure comprises 1021 residues: SWI/SNF-related matrix-associated actin-dependent regulator of chromatin subfamily A containing DEAD/H box 1 (1021 aa).

An N-acetylmethionine modification is found at Met1. Disordered stretches follow at residues 1-82 and 124-151; these read MNLF…SLSC and SEPSEDEESHDLPSVTRRNDSSELEDLS. Positions 7-19 are enriched in basic and acidic residues; the sequence is DRFRFEKRSKIEE. Residues 22–39 are compositionally biased toward low complexity; the sequence is EAAPQPSQARPSSPISLS. Thr54 bears the Phosphothreonine mark. Ser57 bears the Phosphoserine mark. Residue Lys77 forms a Glycyl lysine isopeptide (Lys-Gly) (interchain with G-Cter in SUMO2) linkage. Residues Ser79, Ser124, Ser127, Ser132, Ser144, Ser145, and Ser151 each carry the phosphoserine modification. A CUE 1 domain is found at 156 to 198; that stretch reads LKDAKLQTLKELFPQRSDSDLLKLIESTSTMDGAIAAALLMFG. The segment at 201-246 is disordered; that stretch reads GGGPRKRKLSSSSEEDDVNDDQSVKQPRGDRGEESNESAEASSNWE. Ser210, Ser213, Ser235, and Ser238 each carry phosphoserine. In terms of domain architecture, CUE 2 spans 247–290; the sequence is KQESIVLKLQKEFPNFDKQELREVLKEHEWMYTEALESLKVFAE. The residue at position 298 (Ser298) is a Phosphoserine. The interval 329 to 366 is disordered; the sequence is VKPQNGFNKKRKKNVFNPKKAVEDSEYDSGSDAGSSLD. Residues Lys330 and Lys466 each participate in a glycyl lysine isopeptide (Lys-Gly) (interchain with G-Cter in SUMO2) cross-link. The 169-residue stretch at 504–672 folds into the Helicase ATP-binding domain; sequence ALVHKHGLNG…MSLLNFVMPH (169 aa). 516–524 provides a ligand contact to ATP; that stretch reads ADEMGLGKT. A DEGH box motif is present at residues 623-626; it reads DEGH. The short motif at 716 to 733 is the Nuclear localization signal element; sequence RRVKEEVLKLLPPKKDRI. Lys719 participates in a covalent cross-link: Glycyl lysine isopeptide (Lys-Gly) (interchain with G-Cter in SUMO2). A Helicase C-terminal domain is found at 853-1005; the sequence is ALGCILSELK…MTTVDEADEG (153 aa). 892–899 provides a ligand contact to ATP; the sequence is YLRLDGKT. A Glycyl lysine isopeptide (Lys-Gly) (interchain with G-Cter in SUMO2) cross-link involves residue Lys991. Residues 1000 to 1003 carry the DEAD box motif; that stretch reads DEAD.

It belongs to the SNF2/RAD54 helicase family. Binds to DNA preferentially in the vicinity of transcriptional start sites. Interacts with MSH2 and TRIM28. Part of a complex composed of TRIM28, HDAC1, HDAC2 and EHMT2. Interacts with PCNA.

The protein localises to the nucleus. Its subcellular location is the chromosome. It catalyses the reaction ATP + H2O = ADP + phosphate + H(+). Its function is as follows. DNA helicase that possesses intrinsic ATP-dependent nucleosome-remodeling activity and is both required for DNA repair and heterochromatin organization. Promotes DNA end resection of double-strand breaks (DSBs) following DNA damage: probably acts by weakening histone DNA interactions in nucleosomes flanking DSBs. Required for the restoration of heterochromatin organization after replication. Acts at replication sites to facilitate the maintenance of heterochromatin by directing H3 and H4 histones deacetylation, H3 'Lys-9' trimethylation (H3K9me3) and restoration of silencing. This is SWI/SNF-related matrix-associated actin-dependent regulator of chromatin subfamily A containing DEAD/H box 1 (Smarcad1) from Mus musculus (Mouse).